The following is a 1081-amino-acid chain: uncharacterized protein (1081 aa).

2 coiled-coil regions span residues 18 to 131 (AIEE…FEEN) and 173 to 242 (NHDE…NDDK). The segment covering 22–53 (NNKNREIQEKRQKETKDRNDRMVQNQKDRKEM) has biased composition (basic and acidic residues). A disordered region spans residues 22–60 (NNKNREIQEKRQKETKDRNDRMVQNQKDRKEMIGLTNEK). Disordered stretches follow at residues 250-321 (TDDE…KPGI) and 388-1081 (QEPK…GNDE). A compositionally biased stretch (pro residues) spans 267-283 (TPTPTPTPTPTPTPTPT). 2 stretches are compositionally biased toward low complexity: residues 284-313 (PTTT…KTST) and 396-410 (NNQS…QAGD). Residues 411–421 (DQNKNQNRDEN) are compositionally biased toward basic and acidic residues. Low complexity-rich tracts occupy residues 422–568 (NQGG…NNQE), 576–602 (NQDG…GGEN), 614–623 (GENNQDGGEN), 633–644 (DGENNQDGGENN), 662–672 (GENNQDGGENN), and 680–733 (QDGG…NNQD). 3 stretches are compositionally biased toward acidic residues: residues 748-768 (GGED…DNQD), 778-832 (NNQD…DENN), and 840-854 (QDGD…DENN). Composition is skewed to low complexity over residues 855 to 869 (NQDG…GENN) and 877 to 888 (NQDGGENNQDGE). Over residues 889 to 954 (NNQDGDENNN…GDENNQDGDE (66 aa)) the composition is skewed to acidic residues. 3 stretches are compositionally biased toward low complexity: residues 955–975 (NNQG…GGDE), 983–1026 (ENNQ…GGDE), and 1034–1081 (GENN…GNDE).

This is an uncharacterized protein from Dictyostelium discoideum (Social amoeba).